The following is a 218-amino-acid chain: MKFIFSKSIIIATAFFLFILSQLPAVFLNFLNSNGDTYGIAHKNTPPFIILTLVVVTICIFIGIKCGFYQNYRKSLEWKNILLIFSLLIITFFIQKFVVQFITSHNLYNVSHQITNQMKVENILSSLLFPGQFVAVSILAPILEESIYRACFYKLFGYYRWTFFLSCFFFSYVHSGFSWDILGYLPLSIALTYVYHRRQVLTDSILLHALFNTLLFVF.

A run of 5 helical transmembrane segments spans residues 8–28 (SIII…AVFL), 48–68 (FIIL…KCGF), 81–101 (ILLI…VVQF), 123–143 (ILSS…APIL), and 163–183 (FFLS…DILG).

It belongs to the UPF0177 family.

Its subcellular location is the cell membrane. This chain is UPF0177 protein YaiF (yaiF), found in Lactococcus lactis subsp. lactis (strain IL1403) (Streptococcus lactis).